Reading from the N-terminus, the 315-residue chain is Acetaldehyde dehydrogenase (315 aa).

Residue 13–16 (SGNI) coordinates NAD(+). Cysteine 131 functions as the Acyl-thioester intermediate in the catalytic mechanism. Residues 163-171 (SAGPGTRAN) and asparagine 290 each bind NAD(+).

This sequence belongs to the acetaldehyde dehydrogenase family.

It carries out the reaction acetaldehyde + NAD(+) + CoA = acetyl-CoA + NADH + H(+). The chain is Acetaldehyde dehydrogenase from Xanthobacter autotrophicus (strain ATCC BAA-1158 / Py2).